A 339-amino-acid chain; its full sequence is DNA-directed RNA polymerase subunit alpha (339 aa).

An alpha N-terminal domain (alpha-NTD) region spans residues 1 to 233 (MVREKVRIST…DLFIPFLHAE (233 aa)). The tract at residues 267 to 339 (IALKSIFIDQ…FTINLPKNKF (73 aa)) is alpha C-terminal domain (alpha-CTD).

Belongs to the RNA polymerase alpha chain family. As to quaternary structure, in plastids the minimal PEP RNA polymerase catalytic core is composed of four subunits: alpha, beta, beta', and beta''. When a (nuclear-encoded) sigma factor is associated with the core the holoenzyme is formed, which can initiate transcription.

It is found in the plastid. Its subcellular location is the chloroplast. It carries out the reaction RNA(n) + a ribonucleoside 5'-triphosphate = RNA(n+1) + diphosphate. Functionally, DNA-dependent RNA polymerase catalyzes the transcription of DNA into RNA using the four ribonucleoside triphosphates as substrates. The polypeptide is DNA-directed RNA polymerase subunit alpha (Populus alba (White poplar)).